The primary structure comprises 748 residues: 5-methyltetrahydropteroyltriglutamate--homocysteine methyltransferase (748 aa).

5-methyltetrahydropteroyltri-L-glutamate is bound at residue Lys-111. L-homocysteine-binding positions include 428–430 (IGS) and Glu-478. Residues 428-430 (IGS) and Glu-478 contribute to the L-methionine site. Residues 509–510 (RC) and Trp-555 each bind 5-methyltetrahydropteroyltri-L-glutamate. L-homocysteine is bound at residue Asp-593. Asp-593 contributes to the L-methionine binding site. Residue Glu-599 coordinates 5-methyltetrahydropteroyltri-L-glutamate. 3 residues coordinate Zn(2+): His-635, Cys-637, and Glu-659. The active-site Proton donor is the His-687. Cys-719 is a Zn(2+) binding site.

The protein belongs to the vitamin-B12 independent methionine synthase family. Requires Zn(2+) as cofactor.

It catalyses the reaction 5-methyltetrahydropteroyltri-L-glutamate + L-homocysteine = tetrahydropteroyltri-L-glutamate + L-methionine. It participates in amino-acid biosynthesis; L-methionine biosynthesis via de novo pathway; L-methionine from L-homocysteine (MetE route): step 1/1. Functionally, catalyzes the transfer of a methyl group from 5-methyltetrahydrofolate to homocysteine resulting in methionine formation. In Herpetosiphon aurantiacus (strain ATCC 23779 / DSM 785 / 114-95), this protein is 5-methyltetrahydropteroyltriglutamate--homocysteine methyltransferase.